Here is a 441-residue protein sequence, read N- to C-terminus: tRNA modification GTPase MnmE (441 aa).

3 residues coordinate (6S)-5-formyl-5,6,7,8-tetrahydrofolate: Arg-21, Glu-79, and Lys-118. In terms of domain architecture, TrmE-type G spans 214–367 (GIHITILGAP…LVAELARVVE (154 aa)). GTP is bound by residues 224–229 (NAGKSS), 243–249 (SAQAGTT), and 268–271 (DTAG). 2 residues coordinate Mg(2+): Ser-228 and Thr-249. Lys-441 is a (6S)-5-formyl-5,6,7,8-tetrahydrofolate binding site.

Belongs to the TRAFAC class TrmE-Era-EngA-EngB-Septin-like GTPase superfamily. TrmE GTPase family. Homodimer. Heterotetramer of two MnmE and two MnmG subunits. It depends on K(+) as a cofactor.

It is found in the cytoplasm. Its function is as follows. Exhibits a very high intrinsic GTPase hydrolysis rate. Involved in the addition of a carboxymethylaminomethyl (cmnm) group at the wobble position (U34) of certain tRNAs, forming tRNA-cmnm(5)s(2)U34. This chain is tRNA modification GTPase MnmE, found in Paramagnetospirillum magneticum (strain ATCC 700264 / AMB-1) (Magnetospirillum magneticum).